Consider the following 341-residue polypeptide: Phenylalanine--tRNA ligase alpha subunit (341 aa).

Glutamate 255 provides a ligand contact to Mg(2+).

Belongs to the class-II aminoacyl-tRNA synthetase family. Phe-tRNA synthetase alpha subunit type 1 subfamily. In terms of assembly, tetramer of two alpha and two beta subunits. It depends on Mg(2+) as a cofactor.

Its subcellular location is the cytoplasm. The catalysed reaction is tRNA(Phe) + L-phenylalanine + ATP = L-phenylalanyl-tRNA(Phe) + AMP + diphosphate + H(+). The protein is Phenylalanine--tRNA ligase alpha subunit of Natranaerobius thermophilus (strain ATCC BAA-1301 / DSM 18059 / JW/NM-WN-LF).